The sequence spans 192 residues: Putative molybdenum cofactor guanylyltransferase (192 aa).

GTP contacts are provided by residues 8–10 (LAG), Lys-21, Asp-67, and Asp-101. Asp-101 is a Mg(2+) binding site.

It belongs to the MobA family. Monomer. Mg(2+) serves as cofactor.

The protein resides in the cytoplasm. It carries out the reaction Mo-molybdopterin + GTP + H(+) = Mo-molybdopterin guanine dinucleotide + diphosphate. Its function is as follows. Transfers a GMP moiety from GTP to Mo-molybdopterin (Mo-MPT) cofactor (Moco or molybdenum cofactor) to form Mo-molybdopterin guanine dinucleotide (Mo-MGD) cofactor. This Neisseria meningitidis serogroup B (strain ATCC BAA-335 / MC58) protein is Putative molybdenum cofactor guanylyltransferase.